The chain runs to 317 residues: Taste receptor type 2 member 14 (317 aa).

Over 1-7 (MGGVIKS) the chain is Extracellular. A helical membrane pass occupies residues 8–28 (IFTFVLIVEFIIGNLGNSFIA). Topologically, residues 29–55 (LVNCIDWVKGRKISSVDRILTALAISK) are cytoplasmic. The chain crosses the membrane as a helical span at residues 56–76 (ISLVWLIFGSWCVSVFFPALF). The Extracellular portion of the chain corresponds to 77–87 (ATEKMFRMLTN). Cholesterol-binding residues include T86 and W89. A helical transmembrane segment spans residues 88 to 108 (IWTVINHFSVWLATGLGTFYF). At 109–129 (LKIANFSNSIFLYLKWRVKKV) the chain is on the cytoplasmic side. Residues 130-150 (VLVLLLVTSVFLFLNIALINI) traverse the membrane as a helical segment. Residues 151-184 (HINASINGYRRNKTCSSDSSNFTRFSSLIVLTST) are Extracellular-facing. Residues N153, N162, and N171 are each glycosylated (N-linked (GlcNAc...) asparagine). V180 is a cholesterol binding site. Residues 185-205 (VFIFIPFTLSLAMFLLLIFSM) form a helical membrane-spanning segment. The Cytoplasmic segment spans residues 206–232 (WKHRKKMQHTVKRSGDASTKAHRGVKS). The helical transmembrane segment at 233–253 (MMTFFLLYAIFSLSFFISVWT) threads the bilayer. The Extracellular segment spans residues 254–261 (SERLEENL). A helical membrane pass occupies residues 262–282 (IILSQVMGMAYPSCHSCVLIL). Cholesterol is bound by residues S265 and M268. Residues 283–317 (GNKKLRQASLSVLLWLRYMFKDGEPSGHKEFRESS) lie on the Cytoplasmic side of the membrane.

This sequence belongs to the G-protein coupled receptor T2R family. Core component of the TAS2R14-GNAI1 complex, consisting of TAS2R14, GNAI1, GNB1 and GNG2; within the complex interacts with GNAI1. Core component of the TAS2R14-GNAT3 complex, consisting of TAS2R14, GNAT3, GNB1 and GNG2; within the complex interacts with GNAT3. Core component of the TAS2R14-GNAS2 complex, consisting of TAS2R14, GNAS2, GNB1 and GNG2; within the complex interacts with GNAS2.

The protein resides in the membrane. The catalysed reaction is Ca(2+)(in) = Ca(2+)(out). The enzyme catalyses 3',5'-cyclic AMP(in) = 3',5'-cyclic AMP(out). Its activity is regulated as follows. Basal activity is enhanced by binding to bitter tastants, such as flufenamic acid and aristolochic acid. Regulated by cholesterol in a concentration-dependent manner. Gustducin-linked G-protein coupled receptor that plays a role in the perception of bitterness. The activity of this receptor stimulates GNAT3, activating the gustducin G-protein pathway. Likely plays a role in sensing the chemical composition of the gastrointestinal content and other extra-oral tissues via the inhibitory G-protein pathways. The chain is Taste receptor type 2 member 14 (TAS2R14) from Pan paniscus (Pygmy chimpanzee).